A 306-amino-acid polypeptide reads, in one-letter code: Mitochondrial substrate carrier family protein M (306 aa).

The Mitochondrial intermembrane segment spans residues 1–10 (MRYILNNNVE). Solcar repeat units follow at residues 5 to 98 (LNNN…YKNI), 108 to 195 (LNTF…IKFY), and 207 to 299 (LNAS…IKKS). Residues 11–31 (GTSALLGSTVATAFLQPFDFL) traverse the membrane as a helical segment. At 32-72 (KIRLQGSGFASGGDLNKFKRVGVIDTCKNVLKNEGIKQFWR) the chain is on the mitochondrial matrix side. The helical transmembrane segment at 73–89 (GSSPTIVASGIAWGTYM) threads the bilayer. Topologically, residues 90–113 (HFYEAYKNILKSKYNVTQLNTFDH) are mitochondrial intermembrane. The helical transmembrane segment at 114-134 (FICAVGASATQVFITNPIFLI) threads the bilayer. Residues 135 to 163 (KTRMQLQTPGSANYYTGIFDGIKKTVKVE) are Mitochondrial matrix-facing. Residues 164-184 (GFKGLYKGVIPSLWLTFHGGI) form a helical membrane-spanning segment. Over 185 to 211 (QMSSYEHIKFYFSSNSGKSLDSLNASE) the chain is Mitochondrial intermembrane. Residues 212–232 (IFIASSISKFLASTILYPFQV) form a helical membrane-spanning segment. Residues 233 to 278 (VKTRLQDERNIPNQNNVRVYNGTKDVIFKILKNEGIIGFYRGLVPN) are Mitochondrial matrix-facing. The chain crosses the membrane as a helical span at residues 279 to 296 (TLKVIPNTSITLLLYEEI). The Mitochondrial intermembrane portion of the chain corresponds to 297-306 (KKSFNYIINE).

This sequence belongs to the mitochondrial carrier (TC 2.A.29) family.

The protein resides in the mitochondrion inner membrane. Mitochondrial solute carriers shuttle metabolites, nucleotides, and cofactors through the mitochondrial inner membrane. Transports folate across the inner membranes of mitochondria. This chain is Mitochondrial substrate carrier family protein M (mcfM), found in Dictyostelium discoideum (Social amoeba).